The following is a 487-amino-acid chain: Serine/threonine-protein kinase 4 (487 aa).

At Met1 the chain carries N-acetylmethionine. At Thr3 the chain carries Phosphothreonine. In terms of domain architecture, Protein kinase spans 30 to 281 (FDVLEKLGEG…ATQLLQHPFV (252 aa)). Residues 36–44 (LGEGSYGSV) and Lys59 each bind ATP. Catalysis depends on Asp149, which acts as the Proton acceptor. Thr183 carries the post-translational modification Phosphothreonine; by autocatalysis. Ser265 is subject to Phosphoserine. Positions 290 to 310 (LRDLINEAMDVKLKRQESQQR) form a coiled coil. The span at 303–312 (KRQESQQREV) shows a compositional bias: basic and acidic residues. Residues 303–332 (KRQESQQREVDQDDEENSEEDEMDSGTMVR) form a disordered region. Positions 313 to 326 (DQDDEENSEEDEMD) are enriched in acidic residues. Position 320 is a phosphoserine (Ser320). Phosphothreonine occurs at positions 340 and 367. At Thr387 the chain carries Phosphothreonine; by PKB/AKT1. Ser410 and Ser414 each carry phosphoserine. Phosphotyrosine is present on Tyr433. Positions 433–480 (YEFLKSWTVEDLQKRLLALDPMMEQEIEEIRQKYQSKRQPILDAIEAK) constitute an SARAH domain.

Belongs to the protein kinase superfamily. STE Ser/Thr protein kinase family. STE20 subfamily. In terms of assembly, homodimer; mediated via the coiled-coil region. Interacts with NORE1, which inhibits autoactivation. Interacts with and stabilizes SAV1. Interacts with RASSF1. Interacts with FOXO3. Interacts with RASSF2 (via SARAH domain). Interacts with AR, PKB/AKT1, TNNI3 and SIRT1. Interacts with DLG5 (via PDZ domain 3). Interacts with MARK3 and SCRIB in the presence of DLG5. Requires Mg(2+) as cofactor. Autophosphorylated on serine and threonine residues. Phosphorylation at Thr-387 by PKB/AKT1, leads to inhibition of its: kinase activity, nuclear translocation and autophosphorylation at Thr-183. It also diminishes its cleavage by caspases and its ability to phosphorylate FOXO3. Post-translationally, proteolytically cleaved by caspase-3 during apoptosis at Asp-326 and Asp-349 resulting in a 37 kDa or a 39 kDa subunit respectively. The 39 kDa subunit is further cleaved into the 37 kDa form. Proteolytic cleavage results in kinase activation and nuclear translocation of the truncated form (MST1/N). It is less likely that cleavage at Asp-349 is a prerequisite for activation as this site is not conserved in the murine ortholog.

Its subcellular location is the cytoplasm. It localises to the nucleus. The enzyme catalyses L-seryl-[protein] + ATP = O-phospho-L-seryl-[protein] + ADP + H(+). It carries out the reaction L-threonyl-[protein] + ATP = O-phospho-L-threonyl-[protein] + ADP + H(+). Its activity is regulated as follows. Inhibited by the C-terminal non-catalytic region. Activated by caspase-cleavage. Full activation also requires homodimerization and autophosphorylation of Thr-183. Activated by RASSF1 which acts by preventing its dephosphorylation. In terms of biological role, stress-activated, pro-apoptotic kinase which, following caspase-cleavage, enters the nucleus and induces chromatin condensation followed by internucleosomal DNA fragmentation. Key component of the Hippo signaling pathway which plays a pivotal role in organ size control and tumor suppression by restricting proliferation and promoting apoptosis. The core of this pathway is composed of a kinase cascade wherein STK3/MST2 and STK4/MST1, in complex with its regulatory protein SAV1, phosphorylates and activates LATS1/2 in complex with its regulatory protein MOB1, which in turn phosphorylates and inactivates YAP1 oncoprotein and WWTR1/TAZ. Phosphorylation of YAP1 by LATS2 inhibits its translocation into the nucleus to regulate cellular genes important for cell proliferation, cell death, and cell migration. STK3/MST2 and STK4/MST1 are required to repress proliferation of mature hepatocytes, to prevent activation of facultative adult liver stem cells (oval cells), and to inhibit tumor formation. Phosphorylates 'Ser-14' of histone H2B (H2BS14ph) during apoptosis. Phosphorylates FOXO3 upon oxidative stress, which results in its nuclear translocation and cell death initiation. Phosphorylates MOBKL1A, MOBKL1B and RASSF2. Phosphorylates TNNI3 (cardiac Tn-I) and alters its binding affinity to TNNC1 (cardiac Tn-C) and TNNT2 (cardiac Tn-T). Phosphorylates FOXO1 on 'Ser-212' and regulates its activation and stimulates transcription of PMAIP1 in a FOXO1-dependent manner. Phosphorylates SIRT1 and inhibits SIRT1-mediated p53/TP53 deacetylation, thereby promoting p53/TP53 dependent transcription and apoptosis upon DNA damage. Acts as an inhibitor of PKB/AKT1. Phosphorylates AR on 'Ser-650' and suppresses its activity by intersecting with PKB/AKT1 signaling and antagonizing formation of AR-chromatin complexes. The polypeptide is Serine/threonine-protein kinase 4 (STK4) (Aotus nancymaae (Ma's night monkey)).